A 438-amino-acid chain; its full sequence is Methylenetetrahydrofolate--tRNA-(uracil-5-)-methyltransferase TrmFO (438 aa).

Position 7-12 (Gly-7–Gly-12) interacts with FAD.

This sequence belongs to the MnmG family. TrmFO subfamily. Requires FAD as cofactor.

Its subcellular location is the cytoplasm. It carries out the reaction uridine(54) in tRNA + (6R)-5,10-methylene-5,6,7,8-tetrahydrofolate + NADH + H(+) = 5-methyluridine(54) in tRNA + (6S)-5,6,7,8-tetrahydrofolate + NAD(+). It catalyses the reaction uridine(54) in tRNA + (6R)-5,10-methylene-5,6,7,8-tetrahydrofolate + NADPH + H(+) = 5-methyluridine(54) in tRNA + (6S)-5,6,7,8-tetrahydrofolate + NADP(+). Its function is as follows. Catalyzes the folate-dependent formation of 5-methyl-uridine at position 54 (M-5-U54) in all tRNAs. The polypeptide is Methylenetetrahydrofolate--tRNA-(uracil-5-)-methyltransferase TrmFO (Sulfurihydrogenibium sp. (strain YO3AOP1)).